Here is a 421-residue protein sequence, read N- to C-terminus: Serine protease HTRA2, mitochondrial (421 aa).

A helical membrane pass occupies residues 63-81; sequence VIRFFVPFSLGALASTMVA. The IAP-binding signature appears at 74–77; that stretch reads ALAS. The interval 138-301 is serine protease; it reads SNGSGFVIEQ…IPIDYVKVFL (164 aa). Catalysis depends on charge relay system residues H156, D188, and S265. The region spanning 324–409 is the PDZ domain; the sequence is MGITMLTLTP…ELDIVILRGV (86 aa).

This sequence belongs to the peptidase S1C family. Interacts with th/DIAP1 (via BIR 2 domain).

Its subcellular location is the mitochondrion intermembrane space. It is found in the mitochondrion membrane. The enzyme catalyses Cleavage of non-polar aliphatic amino-acids at the P1 position, with a preference for Val, Ile and Met. At the P2 and P3 positions, Arg is selected most strongly with a secondary preference for other hydrophilic residues.. Serine protease that shows proteolytic activity against a non-specific substrate beta-casein. Promotes or induces cell death either by direct binding to and inhibition of BIRC proteins (also called inhibitor of apoptosis proteins, IAPs), leading to an increase in caspase activity, or by a BIRC inhibition-independent, caspase-independent and serine protease activity-dependent mechanism. Can antagonize antiapoptotic activity of th/Diap1 by directly inducing the degradation of th/Diap1. The chain is Serine protease HTRA2, mitochondrial from Drosophila virilis (Fruit fly).